A 129-amino-acid chain; its full sequence is Glycine cleavage system H protein 2 (129 aa).

The region spanning Ser24 to Lys105 is the Lipoyl-binding domain. Lys65 is modified (N6-lipoyllysine).

This sequence belongs to the GcvH family. In terms of assembly, the glycine cleavage system is composed of four proteins: P, T, L and H. (R)-lipoate is required as a cofactor.

Functionally, the glycine cleavage system catalyzes the degradation of glycine. The H protein shuttles the methylamine group of glycine from the P protein to the T protein. This is Glycine cleavage system H protein 2 from Pseudomonas aeruginosa (strain ATCC 15692 / DSM 22644 / CIP 104116 / JCM 14847 / LMG 12228 / 1C / PRS 101 / PAO1).